Reading from the N-terminus, the 437-residue chain is GTPase Obg (437 aa).

The Obg domain maps to 2 to 160 (SMFLDTAKIK…RNLELELKVL (159 aa)). One can recognise an OBG-type G domain in the interval 161-338 (ADVGLVGFPS…LLEATAELLE (178 aa)). Residues 167-174 (GFPSVGKS), 192-196 (FTTIV), 214-217 (DLPG), 284-287 (NKMD), and 319-321 (SGI) contribute to the GTP site. The Mg(2+) site is built by serine 174 and threonine 194. Residues 359-437 (GFNPDEPEFA…IGKFEFEFVD (79 aa)) form the OCT domain.

The protein belongs to the TRAFAC class OBG-HflX-like GTPase superfamily. OBG GTPase family. Monomer. The cofactor is Mg(2+).

The protein resides in the cytoplasm. In terms of biological role, an essential GTPase which binds GTP, GDP and possibly (p)ppGpp with moderate affinity, with high nucleotide exchange rates and a fairly low GTP hydrolysis rate. Plays a role in control of the cell cycle, stress response, ribosome biogenesis and in those bacteria that undergo differentiation, in morphogenesis control. This is GTPase Obg from Streptococcus suis (strain 98HAH33).